The following is a 141-amino-acid chain: Nucleoside diphosphate kinase (141 aa).

Lys11, Phe59, Arg87, Thr93, Arg104, and Asn114 together coordinate ATP. His117 (pros-phosphohistidine intermediate) is an active-site residue.

This sequence belongs to the NDK family. Homotetramer. Mg(2+) serves as cofactor.

It is found in the cytoplasm. The catalysed reaction is a 2'-deoxyribonucleoside 5'-diphosphate + ATP = a 2'-deoxyribonucleoside 5'-triphosphate + ADP. It catalyses the reaction a ribonucleoside 5'-diphosphate + ATP = a ribonucleoside 5'-triphosphate + ADP. Functionally, major role in the synthesis of nucleoside triphosphates other than ATP. The ATP gamma phosphate is transferred to the NDP beta phosphate via a ping-pong mechanism, using a phosphorylated active-site intermediate. The sequence is that of Nucleoside diphosphate kinase from Yersinia enterocolitica serotype O:8 / biotype 1B (strain NCTC 13174 / 8081).